Reading from the N-terminus, the 841-residue chain is DNA mismatch repair protein MutS (841 aa).

Position 596 to 603 (596 to 603 (GPNMSGKS)) interacts with ATP.

This sequence belongs to the DNA mismatch repair MutS family.

Its function is as follows. This protein is involved in the repair of mismatches in DNA. It is possible that it carries out the mismatch recognition step. This protein has a weak ATPase activity. This Acholeplasma laidlawii (strain PG-8A) protein is DNA mismatch repair protein MutS.